The chain runs to 1433 residues: DNA-directed RNA polymerase subunit beta' (1433 aa).

Cysteine 60, cysteine 62, cysteine 75, and cysteine 78 together coordinate Zn(2+). Mg(2+)-binding residues include aspartate 449, aspartate 451, and aspartate 453. The Zn(2+) site is built by cysteine 777, cysteine 851, cysteine 858, and cysteine 861. Composition is skewed to acidic residues over residues 1383–1393 (DSEEEEEELSE) and 1411–1433 (EEDEDEDELEEEADDSDDEDDDD). Residues 1383–1433 (DSEEEEEELSELSEAAPVSTATLSKLVAEEDEDEDELEEEADDSDDEDDDD) form a disordered region.

This sequence belongs to the RNA polymerase beta' chain family. As to quaternary structure, the RNAP catalytic core consists of 2 alpha, 1 beta, 1 beta' and 1 omega subunit. When a sigma factor is associated with the core the holoenzyme is formed, which can initiate transcription. The cofactor is Mg(2+). Zn(2+) serves as cofactor.

The enzyme catalyses RNA(n) + a ribonucleoside 5'-triphosphate = RNA(n+1) + diphosphate. In terms of biological role, DNA-dependent RNA polymerase catalyzes the transcription of DNA into RNA using the four ribonucleoside triphosphates as substrates. The polypeptide is DNA-directed RNA polymerase subunit beta' (Leptospira biflexa serovar Patoc (strain Patoc 1 / Ames)).